The chain runs to 113 residues: Pro-corazonin (113 aa).

Positions 1–19 (MATNITMFLIVITLTSVAA) are cleaved as a signal peptide. Gln-20 bears the Pyrrolidone carboxylic acid mark. At Asn-30 the chain carries Asparagine amide. Residues 74–96 (LGPCDTSKTRSTTNPSDTNTSAV) form a disordered region. Over residues 82–96 (TRSTTNPSDTNTSAV) the composition is skewed to polar residues.

It belongs to the corazonin family. In terms of tissue distribution, four pairs of lateral neurosecretory cells in the brains of late instar larvae, pupae and adults.

Its subcellular location is the secreted. Functionally, cardioactive peptide. Corazonin is probably involved in the physiological regulation of the heart beat. The protein is Pro-corazonin of Galleria mellonella (Greater wax moth).